A 113-amino-acid polypeptide reads, in one-letter code: CRISPR-associated endoribonuclease Cas2 2 (113 aa).

Residue D32 coordinates Mg(2+).

This sequence belongs to the CRISPR-associated endoribonuclease Cas2 protein family. As to quaternary structure, homodimer, forms a heterotetramer with a Cas1 homodimer. Requires Mg(2+) as cofactor.

Its function is as follows. CRISPR (clustered regularly interspaced short palindromic repeat), is an adaptive immune system that provides protection against mobile genetic elements (viruses, transposable elements and conjugative plasmids). CRISPR clusters contain sequences complementary to antecedent mobile elements and target invading nucleic acids. CRISPR clusters are transcribed and processed into CRISPR RNA (crRNA). Functions as a ssRNA-specific endoribonuclease. Involved in the integration of spacer DNA into the CRISPR cassette. This chain is CRISPR-associated endoribonuclease Cas2 2 (cas22), found in Nitrosomonas europaea (strain ATCC 19718 / CIP 103999 / KCTC 2705 / NBRC 14298).